Here is a 287-residue protein sequence, read N- to C-terminus: Oxaloacetate decarboxylase (287 aa).

A substrate-binding site is contributed by S50. D88 contributes to the Mg(2+) binding site. Substrate-binding residues include R159 and H235.

The protein belongs to the isocitrate lyase/PEP mutase superfamily. Oxaloacetate decarboxylase family. Homotetramer; dimer of dimers. The cofactor is Mg(2+).

It carries out the reaction oxaloacetate + H(+) = pyruvate + CO2. Catalyzes the decarboxylation of oxaloacetate into pyruvate. Seems to play a role in maintaining cellular concentrations of bicarbonate and pyruvate. The sequence is that of Oxaloacetate decarboxylase from Marinomonas sp. (strain MWYL1).